We begin with the raw amino-acid sequence, 187 residues long: Elongation factor P (187 aa).

Belongs to the elongation factor P family.

Its subcellular location is the cytoplasm. The protein operates within protein biosynthesis; polypeptide chain elongation. Functionally, involved in peptide bond synthesis. Stimulates efficient translation and peptide-bond synthesis on native or reconstituted 70S ribosomes in vitro. Probably functions indirectly by altering the affinity of the ribosome for aminoacyl-tRNA, thus increasing their reactivity as acceptors for peptidyl transferase. In Flavobacterium psychrophilum (strain ATCC 49511 / DSM 21280 / CIP 103535 / JIP02/86), this protein is Elongation factor P.